The chain runs to 401 residues: All trans-polyprenyl-diphosphate synthase PDSS2 (401 aa).

It belongs to the FPP/GGPP synthase family. As to quaternary structure, heterotetramer composed of 2 PDSS1/DPS1 and 2 PDSS2/DLP1 subunits.

The protein localises to the mitochondrion. The enzyme catalyses 7 isopentenyl diphosphate + (2E,6E)-farnesyl diphosphate = all-trans-decaprenyl diphosphate + 7 diphosphate. The catalysed reaction is 6 isopentenyl diphosphate + (2E,6E)-farnesyl diphosphate = all-trans-nonaprenyl diphosphate + 6 diphosphate. It participates in cofactor biosynthesis; ubiquinone biosynthesis. Heterotetrameric enzyme that catalyzes the condensation of farnesyl diphosphate (FPP), which acts as a primer, and isopentenyl diphosphate (IPP) to produce prenyl diphosphates of varying chain lengths and participates in the determination of the side chain of ubiquinone. Supplies nona and decaprenyl diphosphate, the precursors for the side chain of the isoprenoid quinones ubiquinone-9 (Q9) and ubiquinone-10 (Q10) respectively. The enzyme adds isopentenyl diphosphate molecules sequentially to farnesyl diphosphate with trans stereochemistry. May play a role during cerebellar development. May regulate mitochondrial respiratory chain function. The polypeptide is All trans-polyprenyl-diphosphate synthase PDSS2 (Mus musculus (Mouse)).